We begin with the raw amino-acid sequence, 101 residues long: A-type ATP synthase subunit F (101 aa).

It belongs to the V-ATPase F subunit family. In terms of assembly, has multiple subunits, A(3), B(3), C, D, E, F, G, I and K(x); there may be a few other subunits as well.

The protein localises to the cell membrane. In terms of biological role, component of the A-type ATP synthase that produces ATP from ADP in the presence of a proton gradient across the membrane. In Methanosarcina mazei (strain ATCC BAA-159 / DSM 3647 / Goe1 / Go1 / JCM 11833 / OCM 88) (Methanosarcina frisia), this protein is A-type ATP synthase subunit F.